The primary structure comprises 488 residues: Fumarate hydratase, mitochondrial (488 aa).

The transit peptide at 1–24 (MLRFTNCSCKTFVKSSYKLNIRRM) directs the protein to the mitochondrion. Residues 124–126 (SGT), 154–157 (HPNN), 164–166 (SSN), and Thr212 each bind substrate. The active-site Proton donor/acceptor is the His213. Ser343 is an active-site residue. Substrate is bound by residues Ser344 and 349–351 (KVN). The residue at position 428 (Thr428) is a Phosphothreonine.

This sequence belongs to the class-II fumarase/aspartase family. Fumarase subfamily. As to quaternary structure, homotetramer.

Its subcellular location is the mitochondrion matrix. It is found in the cytoplasm. It localises to the nucleus. It carries out the reaction (S)-malate = fumarate + H2O. It functions in the pathway carbohydrate metabolism; tricarboxylic acid cycle; (S)-malate from fumarate: step 1/1. Its function is as follows. Catalyzes the reversible stereospecific interconversion of fumarate to L-malate. In mitochondrion, catalyzes the hydration of fumarate to L-malate in the tricarboxylic acid (TCA) cycle to facilitate a transition step in the production of energy in the form of NADH. In cytoplasm and nucleus, involved in DNA repair in response to DNA damage: following DNA double-strand breaks (DSBs), translocates from the cytosol to the nucleus and promotes DNA repair by catalyzing the dehydration of L-malate to fumarate. The chain is Fumarate hydratase, mitochondrial from Saccharomyces cerevisiae (strain ATCC 204508 / S288c) (Baker's yeast).